Here is a 242-residue protein sequence, read N- to C-terminus: MKILIPTAKEMNTDLPSIEAIPLKPESQTVLDALALYSASQLESFYKVSAEKAAEEFQNIQALKRQTAQHYPALKLFDGLMYRNIKRDKLTEAEQDYLENHVFITSALYGVVPALSPMAPHRLDFLMKLKVVGKTLKSHWKAVYDEALKKEEVIFSLLSSEFETVFSKEIRAKMVTFKFMEDRGGQLKIHSTISKKARGAFLTALIENQVQTVGEARRLNFAGFVYREDLSQPQGLVFVKEV.

This sequence belongs to the UPF0246 family.

The polypeptide is UPF0246 protein SP70585_1589 (Streptococcus pneumoniae (strain 70585)).